The following is a 143-amino-acid chain: Large ribosomal subunit protein uL13 (143 aa).

The protein belongs to the universal ribosomal protein uL13 family. As to quaternary structure, part of the 50S ribosomal subunit.

In terms of biological role, this protein is one of the early assembly proteins of the 50S ribosomal subunit, although it is not seen to bind rRNA by itself. It is important during the early stages of 50S assembly. The chain is Large ribosomal subunit protein uL13 from Coprothermobacter proteolyticus (strain ATCC 35245 / DSM 5265 / OCM 4 / BT).